A 525-amino-acid chain; its full sequence is GMP synthase [glutamine-hydrolyzing] (525 aa).

Residues 8–207 (KILILDFGSQ…ALEICGCPAN (200 aa)) enclose the Glutamine amidotransferase type-1 domain. The active-site Nucleophile is cysteine 85. Residues histidine 181 and glutamate 183 contribute to the active site. Residues 208-400 (WKPSSIIEDA…LGLPYDMLYR (193 aa)) form the GMPS ATP-PPase domain. An ATP-binding site is contributed by 235–241 (SGGVDSS).

Homodimer.

The catalysed reaction is XMP + L-glutamine + ATP + H2O = GMP + L-glutamate + AMP + diphosphate + 2 H(+). It functions in the pathway purine metabolism; GMP biosynthesis; GMP from XMP (L-Gln route): step 1/1. Functionally, catalyzes the synthesis of GMP from XMP. The sequence is that of GMP synthase [glutamine-hydrolyzing] from Shewanella pealeana (strain ATCC 700345 / ANG-SQ1).